We begin with the raw amino-acid sequence, 636 residues long: p-hydroxybenzoate-m-hydroxylase A (636 aa).

Residues 10–39, 241–243, tyrosine 289, and aspartate 310 contribute to the FAD site; these read DIVI…HIDN and RLY. A helical membrane pass occupies residues 11–28; that stretch reads IVIVGAGPVGIVLSLCMS.

Belongs to the PheA/TfdB FAD monooxygenase family. The cofactor is FAD.

It localises to the membrane. The catalysed reaction is 4-hydroxybenzoate + NADH + O2 + H(+) = 3,4-dihydroxybenzoate + NAD(+) + H2O. It carries out the reaction 4-hydroxybenzoate + NADPH + O2 + H(+) = 3,4-dihydroxybenzoate + NADP(+) + H2O. FAD-dependent monooxygenase; part of the benzoic acid degradation pathway also known as the protocatechuic acid pathway. Benzoic acid debradation begins with the conversion of benzoic acid into 4-hydroxybenzoic acid through hydroxylation by the benzoate-4-monooxygenase bphA, and its partner NADPH-cytochrome P450 reductase cprA which act as a mediator in electron donation from NADPH. 4-Hydroxybenzoic acid is then converted into 3,4-dihydroxybenzoic acid (also called protocatechuic acid) by the p-hydroxybenzoate-m-hydroxylase phhA. Protocatechuic acid is converted into 3-carboxy-cis,cis-muconic acid by the intradiol ring-cleavage dioxygenase prcA, which is further metabolized through the 3-oxoadipate pathway to finally enter the tricarboxylic acid cycle (TCA). This is p-hydroxybenzoate-m-hydroxylase A from Aspergillus niger (strain ATCC MYA-4892 / CBS 513.88 / FGSC A1513).